The sequence spans 119 residues: Large ribosomal subunit protein bL20 (119 aa).

This sequence belongs to the bacterial ribosomal protein bL20 family.

In terms of biological role, binds directly to 23S ribosomal RNA and is necessary for the in vitro assembly process of the 50S ribosomal subunit. It is not involved in the protein synthesizing functions of that subunit. This Latilactobacillus sakei subsp. sakei (strain 23K) (Lactobacillus sakei subsp. sakei) protein is Large ribosomal subunit protein bL20.